A 477-amino-acid polypeptide reads, in one-letter code: MTSDQSLSHHEPLPLERLGRTHFVGVGGGGMSGIARIFLSRGVPVSGCDARESRVLAALRAFGARVTVGHDPAHLSDVDTVVASTAVPPTTPELAVARERGLPVLPRAAALASVMAGRRGVAVAGTHGKTTTTSMVVRALQRCGADPSFAIGADLGEPGSNAHDGTGSIFVAEADESDESFLLLPFHAAVVTNVEADHLNHYADLAAIHAAFDRFVAKVPDGGFLVACTDDPGAEEIASRAARRGTVVRRYGTSPRADVRLVDLRLEVAGSRFAVAMDGTVLGELQLRVPGAHNALNATAAVAVTVGLGFPFSEVAEGLADFTGARRRFQPQGEVAGIRVFDDYAHHPTEIAATLRAARVVADGGRLVVAFQPHHYYRTADFRTEFGAALALADEVVVMEVYAPGETPLPGGTGAALAAAVPLPGSAVVFEPSWSAVPEHLAARARPGDLIVTMGAGGDVALLPPLVLDALRRRWQG.

Residue glycine 125–threonine 131 coordinates ATP.

It belongs to the MurCDEF family.

Its subcellular location is the cytoplasm. It carries out the reaction UDP-N-acetyl-alpha-D-muramate + L-alanine + ATP = UDP-N-acetyl-alpha-D-muramoyl-L-alanine + ADP + phosphate + H(+). Its pathway is cell wall biogenesis; peptidoglycan biosynthesis. Its function is as follows. Cell wall formation. This is UDP-N-acetylmuramate--L-alanine ligase from Acidothermus cellulolyticus (strain ATCC 43068 / DSM 8971 / 11B).